The sequence spans 64 residues: Conotoxin VnMLCL-05 (64 aa).

An N-terminal signal peptide occupies residues 1-19 (MLCLPVFIILLLLASPAAP). A propeptide spanning residues 20–43 (NPLQTRIQSNLIRAGPEDANIKTD) is cleaved from the precursor. A Lysine amide modification is found at K63.

It belongs to the conotoxin T superfamily. As to expression, expressed by the venom duct.

The protein resides in the secreted. This is Conotoxin VnMLCL-05 from Conus ventricosus (Mediterranean cone).